Reading from the N-terminus, the 587-residue chain is Zinc finger protein 496 (587 aa).

Positions 1–40 are disordered; it reads MPTALCPRVLAPKESEEPRKMRSPPGENPSPQGELPSPES. Positions 11 to 20 are enriched in basic and acidic residues; the sequence is APKESEEPRK. Residue lysine 13 forms a Glycyl lysine isopeptide (Lys-Gly) (interchain with G-Cter in SUMO2) linkage. In terms of domain architecture, SCAN box spans 42–124; the sequence is RRLFRRFRYQ…AAVEALEREP (83 aa). Serine 185 is modified (phosphoserine). One can recognise a KRAB domain in the interval 221 to 291; the sequence is SPFKDMILCF…ELQDLQGKEV (71 aa). Positions 260–282 are disordered; sequence PPNDLAAQPDLSQGEENEPRVPE. Serine 299 carries the phosphoserine modification. Positions 358-399 are disordered; sequence SSSGDEDSQHGPYCTEELGSPTEKQRSLPASHRSSTEAGGEV. Positions 389–399 are enriched in polar residues; the sequence is HRSSTEAGGEV. Residue lysine 403 forms a Glycyl lysine isopeptide (Lys-Gly) (interchain with G-Cter in SUMO2) linkage. The segment at 406-428 adopts a C2H2-type 1; degenerate zinc-finger fold; it reads YVCPNCGKIFRWRVNFIRHLRSR. C2H2-type zinc fingers lie at residues 435-457 and 463-485; these read HECS…LESH and YRCG…RRIH. The disordered stretch occupies residues 488-513; the sequence is PDRLQPVEKREQAASEDADKGPKEPL. Lysine 496 is covalently cross-linked (Glycyl lysine isopeptide (Lys-Gly) (interchain with G-Cter in SUMO2)). C2H2-type zinc fingers lie at residues 522–545 and 553–575; these read FQCC…SHFH and FQCR…ERLH.

The protein belongs to the krueppel C2H2-type zinc-finger protein family. Interacts (via zinc-fingers) with JARID2. Interacts with NSD1.

The protein localises to the nucleus. Its function is as follows. DNA-binding transcription factor that can both act as an activator and a repressor. In Homo sapiens (Human), this protein is Zinc finger protein 496 (ZNF496).